Reading from the N-terminus, the 221-residue chain is Imidazoleglycerol-phosphate dehydratase (221 aa).

The protein belongs to the imidazoleglycerol-phosphate dehydratase family.

The catalysed reaction is D-erythro-1-(imidazol-4-yl)glycerol 3-phosphate = 3-(imidazol-4-yl)-2-oxopropyl phosphate + H2O. The protein operates within amino-acid biosynthesis; L-histidine biosynthesis; L-histidine from 5-phospho-alpha-D-ribose 1-diphosphate: step 6/9. This Kluyveromyces marxianus (Yeast) protein is Imidazoleglycerol-phosphate dehydratase (HIS3).